Reading from the N-terminus, the 50-residue chain is Peroxiredoxin-6 (50 aa).

The Thioredoxin domain maps to 1 to 50 (DFTPVCTTELGRLAPEFAKRVVFIFGPDKKLKLSILYPATTGRNFDEILR). Thr-3 is modified (phosphothreonine). Cys-6 (cysteine sulfenic acid (-SOH) intermediate; for peroxidase activity) is an active-site residue. An N6-acetyllysine modification is found at Lys-19. The active-site For phospholipase activity is Asp-28.

This sequence belongs to the peroxiredoxin family. Prx6 subfamily. As to quaternary structure, homodimer. Interacts with GSTP1; mediates PRDX6 glutathionylation and regeneration. Interacts with APEX1. Interacts with STH. May interact with FAM168B. May interact with HTR2A. Irreversibly inactivated by overoxidation of Cys-6 to sulfinic acid (Cys-SO(2)H) and sulfonic acid (Cys-SO(3)H) forms upon oxidative stress. In terms of processing, phosphorylation at Thr-177 by MAP kinases increases the phospholipase activity of the enzyme. The phosphorylated form exhibits a greater lysophosphatidylcholine acyltransferase activity compared to the non-phosphorylated form.

It localises to the cytoplasm. It is found in the lysosome. The enzyme catalyses a hydroperoxide + 2 glutathione = an alcohol + glutathione disulfide + H2O. It catalyses the reaction a 1,2-diacyl-sn-glycero-3-phosphocholine + H2O = a 1-acyl-sn-glycero-3-phosphocholine + a fatty acid + H(+). The catalysed reaction is a 1-acyl-sn-glycero-3-phosphocholine + an acyl-CoA = a 1,2-diacyl-sn-glycero-3-phosphocholine + CoA. It carries out the reaction 1-hexadecanoyl-sn-glycero-3-phosphocholine + hexadecanoyl-CoA = 1,2-dihexadecanoyl-sn-glycero-3-phosphocholine + CoA. The enzyme catalyses 1,2-dihexadecanoyl-sn-glycero-3-phosphocholine + H2O = 1-hexadecanoyl-sn-glycero-3-phosphocholine + hexadecanoate + H(+). Functionally, thiol-specific peroxidase that catalyzes the reduction of hydrogen peroxide and organic hydroperoxides to water and alcohols, respectively. Can reduce H(2)O(2) and short chain organic, fatty acid, and phospholipid hydroperoxides. Also has phospholipase activity, and can therefore either reduce the oxidized sn-2 fatty acyl group of phospholipids (peroxidase activity) or hydrolyze the sn-2 ester bond of phospholipids (phospholipase activity). These activities are dependent on binding to phospholipids at acidic pH and to oxidized phospholipds at cytosolic pH. Plays a role in cell protection against oxidative stress by detoxifying peroxides and in phospholipid homeostasis. Exhibits acyl-CoA-dependent lysophospholipid acyltransferase which mediates the conversion of lysophosphatidylcholine (1-acyl-sn-glycero-3-phosphocholine or LPC) into phosphatidylcholine (1,2-diacyl-sn-glycero-3-phosphocholine or PC). Shows a clear preference for LPC as the lysophospholipid and for palmitoyl CoA as the fatty acyl substrate. This Mesocricetus auratus (Golden hamster) protein is Peroxiredoxin-6.